The following is a 432-amino-acid chain: Enolase (432 aa).

Position 166 (Gln-166) interacts with (2R)-2-phosphoglycerate. The Proton donor role is filled by Glu-208. Mg(2+)-binding residues include Asp-245, Glu-291, and Asp-318. Lys-343, Arg-372, Ser-373, and Lys-394 together coordinate (2R)-2-phosphoglycerate. Lys-343 acts as the Proton acceptor in catalysis.

Belongs to the enolase family. The cofactor is Mg(2+).

The protein localises to the cytoplasm. It is found in the secreted. The protein resides in the cell surface. The catalysed reaction is (2R)-2-phosphoglycerate = phosphoenolpyruvate + H2O. Its pathway is carbohydrate degradation; glycolysis; pyruvate from D-glyceraldehyde 3-phosphate: step 4/5. Catalyzes the reversible conversion of 2-phosphoglycerate (2-PG) into phosphoenolpyruvate (PEP). It is essential for the degradation of carbohydrates via glycolysis. The sequence is that of Enolase from Leptospira borgpetersenii serovar Hardjo-bovis (strain L550).